Reading from the N-terminus, the 591-residue chain is V-type ATP synthase alpha chain (591 aa).

ATP is bound at residue 242–249; the sequence is GPFGAGKT.

Belongs to the ATPase alpha/beta chains family.

It catalyses the reaction ATP + H2O + 4 H(+)(in) = ADP + phosphate + 5 H(+)(out). Its function is as follows. Produces ATP from ADP in the presence of a proton gradient across the membrane. The V-type alpha chain is a catalytic subunit. The sequence is that of V-type ATP synthase alpha chain from Chlamydia trachomatis serovar A (strain ATCC VR-571B / DSM 19440 / HAR-13).